Reading from the N-terminus, the 478-residue chain is Proline--tRNA ligase (478 aa).

Belongs to the class-II aminoacyl-tRNA synthetase family. ProS type 3 subfamily. In terms of assembly, homodimer.

The protein resides in the cytoplasm. The enzyme catalyses tRNA(Pro) + L-proline + ATP = L-prolyl-tRNA(Pro) + AMP + diphosphate. Its function is as follows. Catalyzes the attachment of proline to tRNA(Pro) in a two-step reaction: proline is first activated by ATP to form Pro-AMP and then transferred to the acceptor end of tRNA(Pro). The sequence is that of Proline--tRNA ligase from Clostridium botulinum (strain 657 / Type Ba4).